The chain runs to 166 residues: Endoribonuclease YbeY (166 aa).

H111, H115, and H121 together coordinate Zn(2+). The disordered stretch occupies residues 141-166 (LGYPDPYAEDESADHPHSDTPSKDHE). Basic and acidic residues predominate over residues 153–166 (ADHPHSDTPSKDHE).

This sequence belongs to the endoribonuclease YbeY family. The cofactor is Zn(2+).

The protein localises to the cytoplasm. Its function is as follows. Single strand-specific metallo-endoribonuclease involved in late-stage 70S ribosome quality control and in maturation of the 3' terminus of the 16S rRNA. The polypeptide is Endoribonuclease YbeY (Pseudomonas savastanoi pv. phaseolicola (strain 1448A / Race 6) (Pseudomonas syringae pv. phaseolicola (strain 1448A / Race 6))).